Here is a 638-residue protein sequence, read N- to C-terminus: Growth hormone receptor (638 aa).

Residues 1–18 (MDLWRVFLTLALAVSSDM) form the signal peptide. Over 19-265 (FPGSGATPAT…TLAACEEDFR (247 aa)) the chain is Extracellular. 2 disulfide bridges follow: cysteine 56–cysteine 66 and cysteine 101–cysteine 112. Asparagine 115 is a glycosylation site (N-linked (GlcNAc...) asparagine). A disulfide bond links cysteine 126 and cysteine 140. Positions 151-254 (PPIGLNWTLL…EVLRVTFPQM (104 aa)) constitute a Fibronectin type-III domain. 3 N-linked (GlcNAc...) asparagine glycosylation sites follow: asparagine 156, asparagine 161, and asparagine 200. The WSXWS motif motif lies at 240–244 (YSEFS). The helical transmembrane segment at 266-289 (FPWFLIIIFGIFGVAVMLFVVIFS) threads the bilayer. Over 290–638 (KQQRIKMLIL…STDQLNKIMQ (349 aa)) the chain is Cytoplasmic. The segment at 295-380 (KMLILPPVPV…QEKSAGILGA (86 aa)) is required for JAK2 binding. The short motif at 298 to 306 (ILPPVPVPK) is the Box 1 motif element. The UbE motif motif lies at 341 to 350 (DSWVEFIELD). A Phosphoserine modification is found at serine 342. The disordered stretch occupies residues 357–389 (KTEESDTDRLLSDDQEKSAGILGAKDDDSGRTS). Positions 363–373 (TDRLLSDDQEK) are enriched in basic and acidic residues. Phosphotyrosine is present on residues tyrosine 487 and tyrosine 594.

The protein belongs to the type I cytokine receptor family. Type 1 subfamily. As to quaternary structure, on growth hormone (GH) binding, forms homodimers and binds JAK2 via a box 1-containing domain. In terms of processing, the soluble form (GHBP) is produced by phorbol ester-promoted proteolytic cleavage at the cell surface (shedding) by ADAM17/TACE. Shedding is inhibited by growth hormone (GH) binding to the receptor probably due to a conformational change in GHR rendering the receptor inaccessible to ADAM17. Post-translationally, on GH binding, phosphorylated on tyrosine residues in the cytoplasmic domain by JAK2. Phosphorylation on either (or all of) Tyr-534, Tyr-566 and/or Tyr-627 is required for STAT5 activation. Phosphorylation on Tyr-333 would seem necessary for JAK2 activation. Ubiquitinated by the ECS(SOCS2) complex following ligand-binding and phosphorylation by JAK2, leading to its degradation by the proteasome. Regulation by the ECS(SOCS2) complex acts as a negative feedback loop of growth hormone receptor signaling. Ubiquitination is not sufficient for GHR internalization. In terms of tissue distribution, highest expression in liver. Also expressed in heart, kidney and muscle.

It localises to the cell membrane. The protein localises to the secreted. Its function is as follows. Receptor for pituitary gland growth hormone involved in regulating postnatal body growth. On ligand binding, couples to, and activates the JAK2/STAT5 pathway. Receptor for pituitary gland growth hormone (GH1) involved in regulating postnatal body growth. On ligand binding, couples to the JAK2/STAT5 pathway. In terms of biological role, the soluble form (GHBP) acts as a reservoir of growth hormone in plasma and may be a modulator/inhibitor of GH signaling. The protein is Growth hormone receptor (Ghr) of Rattus norvegicus (Rat).